The following is a 294-amino-acid chain: MKKLTMESLLVYTFVMGVCFTSNLTCEQKIVLIQEQKLGAICISTCYVNGVLAGNSSCVSVRTSYLINLAMLTDGFKAMKVGNITSISEKTAFLRVIINYYFRGVMLRALIAKRLPNAAQLSSTVNCWLEGHSAGGVMTLFYGTERIVLKSSTEMNASQWTSDGPDANGTLNILNERVSLDSYFLSMICPQLSDEIYKKKVVHSKYFSLIKNDTMPKKFLRNTWKSAWTNWYKYKEIEALLDFSRDYENVSEITHSMSAAGLFFLAGGAFTMLLLLCCLSMITRKHVVKDLGYK.

A signal peptide spans 1–21; the sequence is MKKLTMESLLVYTFVMGVCFT. A helical membrane pass occupies residues 262–282; the sequence is LFFLAGGAFTMLLLLCCLSMI.

The protein belongs to the herpesviridae immediate early glycoprotein family.

It localises to the host membrane. The protein is Putative immediate early glycoprotein (U18) of Homo sapiens (Human).